A 572-amino-acid polypeptide reads, in one-letter code: Proline--tRNA ligase (572 aa).

This sequence belongs to the class-II aminoacyl-tRNA synthetase family. ProS type 1 subfamily. As to quaternary structure, homodimer.

Its subcellular location is the cytoplasm. It carries out the reaction tRNA(Pro) + L-proline + ATP = L-prolyl-tRNA(Pro) + AMP + diphosphate. Catalyzes the attachment of proline to tRNA(Pro) in a two-step reaction: proline is first activated by ATP to form Pro-AMP and then transferred to the acceptor end of tRNA(Pro). As ProRS can inadvertently accommodate and process non-cognate amino acids such as alanine and cysteine, to avoid such errors it has two additional distinct editing activities against alanine. One activity is designated as 'pretransfer' editing and involves the tRNA(Pro)-independent hydrolysis of activated Ala-AMP. The other activity is designated 'posttransfer' editing and involves deacylation of mischarged Ala-tRNA(Pro). The misacylated Cys-tRNA(Pro) is not edited by ProRS. This chain is Proline--tRNA ligase, found in Buchnera aphidicola subsp. Acyrthosiphon pisum (strain APS) (Acyrthosiphon pisum symbiotic bacterium).